We begin with the raw amino-acid sequence, 104 residues long: Protein RnfH (104 aa).

It belongs to the UPF0125 (RnfH) family.

In Pseudomonas syringae pv. syringae (strain B728a), this protein is Protein RnfH.